A 2605-amino-acid polypeptide reads, in one-letter code: Protein ABERRANT POLLEN TRANSMISSION 1 (2605 aa).

A signal peptide spans 1–43 (MMLGLVQLLVGFVVAWEAVELVLRHGLLLSVFKLAILAALAAA). The tract at residues 137–158 (STNKKKPAPRKPISTTTAKAKG) is disordered. N-linked (GlcNAc...) asparagine glycosylation is found at Asn232, Asn320, Asn348, Asn516, Asn587, Asn628, Asn696, Asn779, Asn1171, Asn1318, and Asn1459. The disordered stretch occupies residues 305–326 (SASTVAEQKDEPSVDNKSAARS). The segment covering 311-326 (EQKDEPSVDNKSAARS) has biased composition (basic and acidic residues). A disordered region spans residues 1761 to 1818 (MSKDGALSSVSSTSQPSEPQQIKSSESPPSNGSGKPDLTSSSENALKRSNNSDSEEEG). A compositionally biased stretch (low complexity) spans 1768-1781 (SSVSSTSQPSEPQQ). Residues 1782–1812 (IKSSESPPSNGSGKPDLTSSSENALKRSNNS) show a composition bias toward polar residues. 5 N-linked (GlcNAc...) asparagine glycosylation sites follow: Asn1791, Asn1810, Asn2003, Asn2280, and Asn2291. Disordered stretches follow at residues 2269-2312 (VSTT…SSFD) and 2332-2361 (EGQTNTQYEPQDAAKDSKLLRPVRSTREDK). Over residues 2281 to 2300 (TSVAETNSPNNQSSKETTFA) the composition is skewed to polar residues. Basic and acidic residues-rich tracts occupy residues 2303 to 2312 (PELRRTSSFD) and 2343 to 2361 (DAAKDSKLLRPVRSTREDK). Asn2468 and Asn2564 each carry an N-linked (GlcNAc...) asparagine glycan. The tract at residues 2574-2605 (TELEVAELPPRAPGYNTDSSSDSSSAETSPKD) is disordered.

Belongs to the SABRE family. In terms of tissue distribution, mature pollen-specific.

The protein localises to the secreted. The protein resides in the golgi apparatus. Its function is as follows. May be involved in membrane trafficking. Required for tip growth in pollen tubes and root hairs. The polypeptide is Protein ABERRANT POLLEN TRANSMISSION 1 (Zea mays (Maize)).